Reading from the N-terminus, the 163-residue chain is ATP synthase subunit b (163 aa).

A helical membrane pass occupies residues 13-33 (SFILFVWFCMKYIWPPIIFAI).

It belongs to the ATPase B chain family. As to quaternary structure, F-type ATPases have 2 components, F(1) - the catalytic core - and F(0) - the membrane proton channel. F(1) has five subunits: alpha(3), beta(3), gamma(1), delta(1), epsilon(1). F(0) has three main subunits: a(1), b(2) and c(10-14). The alpha and beta chains form an alternating ring which encloses part of the gamma chain. F(1) is attached to F(0) by a central stalk formed by the gamma and epsilon chains, while a peripheral stalk is formed by the delta and b chains.

The protein resides in the cell membrane. In terms of biological role, f(1)F(0) ATP synthase produces ATP from ADP in the presence of a proton or sodium gradient. F-type ATPases consist of two structural domains, F(1) containing the extramembraneous catalytic core and F(0) containing the membrane proton channel, linked together by a central stalk and a peripheral stalk. During catalysis, ATP synthesis in the catalytic domain of F(1) is coupled via a rotary mechanism of the central stalk subunits to proton translocation. Component of the F(0) channel, it forms part of the peripheral stalk, linking F(1) to F(0). This chain is ATP synthase subunit b, found in Buchnera aphidicola subsp. Schizaphis graminum (strain Sg).